Here is a 178-residue protein sequence, read N- to C-terminus: E1B protein, small T-antigen (178 aa).

This sequence belongs to the adenoviridae E1B 19 kDa protein family.

It localises to the host cell membrane. The protein localises to the host nucleus envelope. It is found in the host nucleus lamina. Putative adenovirus Bcl-2 homolog that inhibits apoptosis induced by TNF or FAS pathways, as well as p53-mediated apoptosis. Without E1B 19K function, virus production is compromised because of premature death of host cell. Interacts with Bax protein in cell lysates. The chain is E1B protein, small T-antigen from Human adenovirus B serotype 7 (HAdV-7).